The following is a 253-amino-acid chain: Probable transcriptional regulatory protein RBE_0568 (253 aa).

A disordered region spans residues 1–21; the sequence is MAGHSKFKNIQHRKGAQDKKR.

It belongs to the TACO1 family.

It is found in the cytoplasm. The chain is Probable transcriptional regulatory protein RBE_0568 from Rickettsia bellii (strain RML369-C).